The primary structure comprises 104 residues: Precursor of CEP11 (104 aa).

Positions 1–27 (MAKTRRVIYLFLTIVLLFCELIDEAQG) are cleaved as a signal peptide. The propeptide occupies 28–85 (SRFRCHHSEDYSCKKRSSHHHHHHHHHQQQQHHHKDTPPEELQGSIKTRRSKDIYGLN). A disordered region spans residues 37–104 (DYSCKKRSSH…SPGVGHLIKT (68 aa)). The segment covering 41-62 (KKRSSHHHHHHHHHQQQQHHHK) has biased composition (basic residues). A hydroxyproline mark is found at proline 92 and proline 96. Residues 101-104 (LIKT) constitute a propeptide that is removed on maturation.

It belongs to the C-terminally encoded plant signaling peptide (CEP) family. In terms of assembly, interacts with CEP receptors (e.g. CEPR1 and CEPR2). The mature small signaling peptide is generated by proteolytic processing of the longer precursor. In terms of tissue distribution, expressed in lateral root primordia and in lateral roots excluding the meristem region.

The protein resides in the secreted. It is found in the extracellular space. Its subcellular location is the apoplast. Extracellular signaling peptide that may regulate primary root growth rate and systemic nitrogen (N)-demand signaling. Mediates up-regulation of genes involved in N uptake and assimilation pathways. This chain is Precursor of CEP11, found in Arabidopsis thaliana (Mouse-ear cress).